Reading from the N-terminus, the 852-residue chain is 2-deoxy-glucose resistant protein 2 (852 aa).

Residues 1-18 show a composition bias toward polar residues; the sequence is MFKSKTSTLSYDETPNSN. The tract at residues 1–60 is disordered; it reads MFKSKTSTLSYDETPNSNEGDRNATPVNPKEKSQTKHLNIPGDRSRHSSIADSKRSSSRY. WD repeat units lie at residues 171–210, 278–316, 318–358, 426–471, 476–515, and 651–689; these read LFKN…VKRS, EHAL…SLKT, VHPD…VSYA, QHGP…ELFK, GSSR…LSAE, and GFSS…EIRK. Ser-716 bears the Phosphoserine mark. Positions 723-748 are disordered; the sequence is DERSSTEDNEFSTTPPSNTHNSRPSH. Positions 733-744 are enriched in polar residues; it reads FSTTPPSNTHNS.

It belongs to the WD repeat DGR2 family.

This Saccharomyces cerevisiae (strain ATCC 204508 / S288c) (Baker's yeast) protein is 2-deoxy-glucose resistant protein 2 (DGR2).